A 215-amino-acid chain; its full sequence is Ribosomal RNA small subunit methyltransferase G (215 aa).

Residues G77, F82, 130-131 (IE), and R146 contribute to the S-adenosyl-L-methionine site.

This sequence belongs to the methyltransferase superfamily. RNA methyltransferase RsmG family.

Its subcellular location is the cytoplasm. It carries out the reaction guanosine(527) in 16S rRNA + S-adenosyl-L-methionine = N(7)-methylguanosine(527) in 16S rRNA + S-adenosyl-L-homocysteine. Its function is as follows. Specifically methylates the N7 position of guanine in position 527 of 16S rRNA. This chain is Ribosomal RNA small subunit methyltransferase G, found in Bartonella quintana (strain Toulouse) (Rochalimaea quintana).